A 340-amino-acid chain; its full sequence is Pre-mRNA-splicing factor cwf17 (340 aa).

WD repeat units lie at residues 48–87, 91–130, 133–173, 175–214, 217–256, 267–306, and 308–339; these read GHTAEVLVARFDPSGSYFASGGMDRQILLWNVFGDVKNYG, GCKGAITDLQWSRDSRVVYCSSSDTHLMSWDAVSGQKIRK, GHAG…CIKT, EEKYPLTAVAIAQQGTQVFIGGIDGAIKIWDLRNNHCSHV, GHKDIITSLAISKDGSSLLSNSMDNTVRIFDVKPFASAQR, GQEHNLLGVAWSRNSRFVGAGSSDKNVYVWSATGDLRYVL, and GHEGSVNHVDFHPHQDIILSCSSDRTIFLGEL.

As to quaternary structure, belongs to the 40S cdc5-associated complex (or cwf complex), a spliceosome sub-complex reminiscent of a late-stage spliceosome composed of the U2, U5 and U6 snRNAs and at least brr2, cdc5, cwf2/prp3, cwf3/syf1, cwf4/syf3, cwf5/ecm2, spp42/cwf6, cwf7/spf27, cwf8, cwf9, cwf10, cwf11, cwf12, prp45/cwf13, cwf14, cwf15, cwf16, cwf17, cwf18, cwf19, cwf20, cwf21, cwf22, cwf23, cwf24, cwf25, cwf26, cyp7/cwf27, cwf28, cwf29/ist3, lea1, msl1, prp5/cwf1, prp10, prp12/sap130, prp17, prp22, sap61, sap62, sap114, sap145, slu7, smb1, smd1, smd3, smf1, smg1 and syf2.

The protein resides in the nucleus. Its function is as follows. Involved in mRNA splicing where it associates with cdc5 and the other cwf proteins as part of the spliceosome. This chain is Pre-mRNA-splicing factor cwf17 (cwf17), found in Schizosaccharomyces pombe (strain 972 / ATCC 24843) (Fission yeast).